The following is a 126-amino-acid chain: Phosphoribosyl-AMP cyclohydrolase (126 aa).

Asp-76 provides a ligand contact to Mg(2+). Cys-77 contributes to the Zn(2+) binding site. Mg(2+) contacts are provided by Asp-78 and Asp-80. Zn(2+) is bound by residues Cys-94 and Cys-101.

This sequence belongs to the PRA-CH family. In terms of assembly, homodimer. It depends on Mg(2+) as a cofactor. The cofactor is Zn(2+).

The protein resides in the cytoplasm. The catalysed reaction is 1-(5-phospho-beta-D-ribosyl)-5'-AMP + H2O = 1-(5-phospho-beta-D-ribosyl)-5-[(5-phospho-beta-D-ribosylamino)methylideneamino]imidazole-4-carboxamide. Its pathway is amino-acid biosynthesis; L-histidine biosynthesis; L-histidine from 5-phospho-alpha-D-ribose 1-diphosphate: step 3/9. Functionally, catalyzes the hydrolysis of the adenine ring of phosphoribosyl-AMP. In Vesicomyosocius okutanii subsp. Calyptogena okutanii (strain HA), this protein is Phosphoribosyl-AMP cyclohydrolase.